The primary structure comprises 156 residues: Small ribosomal subunit protein uS7 (156 aa).

Belongs to the universal ribosomal protein uS7 family. As to quaternary structure, part of the 30S ribosomal subunit. Contacts proteins S9 and S11.

One of the primary rRNA binding proteins, it binds directly to 16S rRNA where it nucleates assembly of the head domain of the 30S subunit. Is located at the subunit interface close to the decoding center, probably blocks exit of the E-site tRNA. The polypeptide is Small ribosomal subunit protein uS7 (Rhodopseudomonas palustris (strain BisB5)).